Here is an 87-residue protein sequence, read N- to C-terminus: Small ribosomal subunit protein uS17 (87 aa).

Belongs to the universal ribosomal protein uS17 family. Part of the 30S ribosomal subunit.

In terms of biological role, one of the primary rRNA binding proteins, it binds specifically to the 5'-end of 16S ribosomal RNA. The polypeptide is Small ribosomal subunit protein uS17 (Bacillus licheniformis (strain ATCC 14580 / DSM 13 / JCM 2505 / CCUG 7422 / NBRC 12200 / NCIMB 9375 / NCTC 10341 / NRRL NRS-1264 / Gibson 46)).